Here is a 393-residue protein sequence, read N- to C-terminus: Putative competence-damage inducible protein (393 aa).

Belongs to the CinA family.

The protein is Putative competence-damage inducible protein of Streptococcus suis (strain 98HAH33).